The sequence spans 262 residues: Putative carbamate hydrolase RutD (262 aa).

It belongs to the AB hydrolase superfamily. Hydrolase RutD family.

It catalyses the reaction carbamate + 2 H(+) = NH4(+) + CO2. Involved in pyrimidine catabolism. May facilitate the hydrolysis of carbamate, a reaction that can also occur spontaneously. The protein is Putative carbamate hydrolase RutD of Rhizobium rhizogenes (strain K84 / ATCC BAA-868) (Agrobacterium radiobacter).